The sequence spans 430 residues: MTSVVVVGTQWGDEGKGKITDFLSADAEVIARYQGGDNAGHTIVIDGKKFKLHLIPSGIFFPQKISVIGNGVVVNPKSLVKELAYLHNEGVTTDNLRISDRAQVILPYHIQLDQLQEDAKGDNKIGTTIKGIGPAYMDKAARVGIRIADLLDKDIFAERLRINLAEKNRLFEKMYDSTPLDFDAIFEEYYAYGQEIKQYVTDTSVILNDALDAGKRVLFEGAQGVMLDIDQGTYPFVTSSNPVAGGVTIGSGVGPSKINKVVGVCKAYTSRVGDGPFPTELFDEVGERIREVGHEYGTTTGRPRRVGWFDSVVMRHSRRVSGITNLSLNSIDVLSGLDTVKICVAYDLDGKRIDYYPANLEQLKRCKPIYEELPGWQEDITGVRSLEELPENARNYVRRVGELVGVRISTFSVGPGREQTNILESVWASI.

GTP is bound by residues G12–K18 and G40–T42. D13 functions as the Proton acceptor in the catalytic mechanism. The Mg(2+) site is built by D13 and G40. IMP contacts are provided by residues D13–K16, N38–H41, T128, R142, Q223, T238, and R302. Catalysis depends on H41, which acts as the Proton donor. T298–R304 serves as a coordination point for substrate. GTP contacts are provided by residues R304, S330–D332, and S412–G414.

Belongs to the adenylosuccinate synthetase family. In terms of assembly, homodimer. Mg(2+) serves as cofactor.

The protein resides in the cytoplasm. The enzyme catalyses IMP + L-aspartate + GTP = N(6)-(1,2-dicarboxyethyl)-AMP + GDP + phosphate + 2 H(+). The protein operates within purine metabolism; AMP biosynthesis via de novo pathway; AMP from IMP: step 1/2. In terms of biological role, plays an important role in the de novo pathway of purine nucleotide biosynthesis. Catalyzes the first committed step in the biosynthesis of AMP from IMP. The protein is Adenylosuccinate synthetase of Streptococcus pyogenes serotype M4 (strain MGAS10750).